We begin with the raw amino-acid sequence, 234 residues long: Transcription factor UDT1 (234 aa).

The tract at residues 1–51 is disordered; the sequence is MPRRARARGGGGGGGEEVKVEDDFIDSVLNFGGGGGGEEDGDDGEEEQQQQ. The span at 37–48 shows a compositional bias: acidic residues; it reads GEEDGDDGEEEQ. Residues 61-74 are basic motif; degenerate; the sequence is EFKSKNLEAERRRR. Positions 61–110 constitute a bHLH domain; that stretch reads EFKSKNLEAERRRRGRLNGNIFALRAVVPKITKMSKEATLSDAIEHIKNL. The tract at residues 75–110 is helix-loop-helix motif; the sequence is GRLNGNIFALRAVVPKITKMSKEATLSDAIEHIKNL.

The protein belongs to the bHLH protein family.

It localises to the nucleus. Functionally, transcription factor that plays a crucial role in tapetum development. Required for male fertility and pollen differentiation within the developing anther. Plays a major role in maintaining tapetum development, starting in early meiosis. Required for pollen mother cell meiosis. May regulate the anther-specific cysteine protease CP1 and lipid-transfer proteins C4 and C6. Required for anther development. Functions in parallel with GAMYB to regulate early anther development. Functions upstream of the transcription factor TDR and may positively regulate its transcription. This Oryza sativa subsp. japonica (Rice) protein is Transcription factor UDT1.